Reading from the N-terminus, the 314-residue chain is Vomeronasal type-1 receptor 95 (314 aa).

At M1–S18 the chain is on the extracellular side. A helical transmembrane segment spans residues E19–I39. At R40–D48 the chain is on the cytoplasmic side. Residues L49–T69 traverse the membrane as a helical segment. Residues E70–I88 lie on the Extracellular side of the membrane. The cysteines at positions 84 and 171 are disulfide-linked. Residues F89–L113 traverse the membrane as a helical segment. Over C114 to C133 the chain is Cytoplasmic. A helical membrane pass occupies residues F134–I154. The Extracellular segment spans residues A155 to T186. N158 is a glycosylation site (N-linked (GlcNAc...) asparagine). A helical membrane pass occupies residues L187–A207. The Cytoplasmic segment spans residues T208–A235. Residues I236–M256 form a helical membrane-spanning segment. Residues T257–S268 are Extracellular-facing. A glycan (N-linked (GlcNAc...) asparagine) is linked at N266. A helical membrane pass occupies residues L269 to L289. The Cytoplasmic portion of the chain corresponds to N290–S314.

The protein belongs to the G-protein coupled receptor 1 family.

It is found in the cell membrane. Putative pheromone receptor implicated in the regulation of social as well as reproductive behavior. The polypeptide is Vomeronasal type-1 receptor 95 (Vom1r95) (Rattus norvegicus (Rat)).